We begin with the raw amino-acid sequence, 502 residues long: Peroxisomal catalase (502 aa).

Active-site residues include histidine 64 and asparagine 137. Tyrosine 347 contacts heme. Positions 500–502 match the Microbody targeting signal motif; that stretch reads AKM.

This sequence belongs to the catalase family. The cofactor is heme.

Its subcellular location is the peroxisome matrix. The enzyme catalyses 2 H2O2 = O2 + 2 H2O. Catalyzes the degradation of hydrogen peroxide (H(2)O(2)) generated by peroxisomal oxidases to water and oxygen, thereby protecting cells from the toxic effects of hydrogen peroxide. This is Peroxisomal catalase from Toxoplasma gondii.